Here is a 458-residue protein sequence, read N- to C-terminus: Fumarate hydratase class II 2 (458 aa).

Residues 98 to 100 (SGT), 123 to 126 (NPND), 133 to 135 (SSN), and T181 contribute to the substrate site. Catalysis depends on H182, which acts as the Proton donor/acceptor. S312 is an active-site residue. Residues S313 and 318-320 (KVN) each bind substrate.

This sequence belongs to the class-II fumarase/aspartase family. Fumarase subfamily. In terms of assembly, homotetramer.

It is found in the cytoplasm. The enzyme catalyses (S)-malate = fumarate + H2O. It functions in the pathway carbohydrate metabolism; tricarboxylic acid cycle; (S)-malate from fumarate: step 1/1. Involved in the TCA cycle. Catalyzes the stereospecific interconversion of fumarate to L-malate. In Pseudomonas aeruginosa (strain ATCC 15692 / DSM 22644 / CIP 104116 / JCM 14847 / LMG 12228 / 1C / PRS 101 / PAO1), this protein is Fumarate hydratase class II 2.